We begin with the raw amino-acid sequence, 393 residues long: Riboflavin biosynthesis protein RibBA (393 aa).

Residues 1-200 (MQFDTIELAI…IKSLVAFRKA (200 aa)) form a DHBP synthase region. Residues 27–28 (RE), aspartate 32, 139–143 (RNGHT), and glutamate 163 contribute to the D-ribulose 5-phosphate site. Glutamate 28 lines the Mg(2+) pocket. A Mg(2+)-binding site is contributed by histidine 142. Positions 201-393 (VELNVNLKAK…TKKNKMGHLI (193 aa)) are GTP cyclohydrolase II. 249 to 253 (RMHSA) contacts GTP. 3 residues coordinate Zn(2+): cysteine 254, cysteine 265, and cysteine 267. Residues glutamine 270, 291–293 (EGR), and threonine 313 each bind GTP. Catalysis depends on aspartate 325, which acts as the Proton acceptor; for GTP cyclohydrolase activity. Arginine 327 (nucleophile; for GTP cyclohydrolase activity) is an active-site residue. GTP is bound by residues serine 348 and lysine 353.

The protein in the N-terminal section; belongs to the DHBP synthase family. In the C-terminal section; belongs to the GTP cyclohydrolase II family. Requires Mg(2+) as cofactor. Mn(2+) serves as cofactor. Zn(2+) is required as a cofactor.

The catalysed reaction is D-ribulose 5-phosphate = (2S)-2-hydroxy-3-oxobutyl phosphate + formate + H(+). It carries out the reaction GTP + 4 H2O = 2,5-diamino-6-hydroxy-4-(5-phosphoribosylamino)-pyrimidine + formate + 2 phosphate + 3 H(+). The protein operates within cofactor biosynthesis; riboflavin biosynthesis; 2-hydroxy-3-oxobutyl phosphate from D-ribulose 5-phosphate: step 1/1. It participates in cofactor biosynthesis; riboflavin biosynthesis; 5-amino-6-(D-ribitylamino)uracil from GTP: step 1/4. Functionally, catalyzes the conversion of D-ribulose 5-phosphate to formate and 3,4-dihydroxy-2-butanone 4-phosphate. Its function is as follows. Catalyzes the conversion of GTP to 2,5-diamino-6-ribosylamino-4(3H)-pyrimidinone 5'-phosphate (DARP), formate and pyrophosphate. The chain is Riboflavin biosynthesis protein RibBA from Staphylococcus epidermidis (strain ATCC 35984 / DSM 28319 / BCRC 17069 / CCUG 31568 / BM 3577 / RP62A).